The primary structure comprises 210 residues: Somatotropin (210 aa).

Positions 1–22 (MGQVFLLMPVLLVSCFLSHGAA) are cleaved as a signal peptide. Histidine 38 serves as a coordination point for Zn(2+). The cysteines at positions 71 and 183 are disulfide-linked. Glutamate 192 is a binding site for Zn(2+). An intrachain disulfide couples cysteine 200 to cysteine 208.

The protein belongs to the somatotropin/prolactin family.

It is found in the secreted. Growth hormone plays an important role in growth control and is involved in the regulation of several anabolic processes. Implicated as an osmoregulatory substance important for seawater adaptation. This Oncorhynchus masou (Cherry salmon) protein is Somatotropin (gh).